Reading from the N-terminus, the 308-residue chain is L-lactate dehydrogenase 2 (308 aa).

Residues Val13, Asp34, Arg39, Tyr64, and 78–79 (GV) contribute to the NAD(+) site. Position 87 (Arg87) interacts with substrate. Position 100 (Thr100) interacts with NAD(+). Residue 119-122 (NPVD) participates in substrate binding. Thr142 is a binding site for NAD(+). 147-150 (DSMR) lines the substrate pocket. The active-site Proton acceptor is the His174. Thr224 is a substrate binding site.

Belongs to the LDH/MDH superfamily. LDH family. In terms of assembly, homotetramer.

Its subcellular location is the cytoplasm. The enzyme catalyses (S)-lactate + NAD(+) = pyruvate + NADH + H(+). The protein operates within fermentation; pyruvate fermentation to lactate; (S)-lactate from pyruvate: step 1/1. In terms of biological role, catalyzes the conversion of lactate to pyruvate. The sequence is that of L-lactate dehydrogenase 2 from Lactobacillus acidophilus (strain ATCC 700396 / NCK56 / N2 / NCFM).